The sequence spans 998 residues: Kinesin-like protein KIF19 (998 aa).

In terms of domain architecture, Kinesin motor spans 11–346 (QLMVALRVRP…LTYAGRAKNI (336 aa)). Residue 104-111 (GPTGCGKT) coordinates ATP. 2 coiled-coil regions span residues 360–391 (HIAQYTSIIADLRGEIQRLKRKIDEQTGRGQA) and 424–452 (EQLASAFQEQMDVRRRLLELENRAMEVQI). The span at 482 to 494 (ECYAKDDSEKDSD) shows a compositional bias: basic and acidic residues. Residues 482–503 (ECYAKDDSEKDSDTGDDQPDIL) form a disordered region. The stretch at 507 to 552 (EVAAARESIAALVDEQKQLRKQKLALEQRCRELRARGRRLEETLPR) forms a coiled coil. 4 stretches are compositionally biased toward polar residues: residues 662 to 676 (SSLPKITPAGTSLTP), 684 to 697 (KTLSSDAQHLQNSA), 746 to 761 (SLGSWINSSPDSSENL), and 836 to 852 (TLQHAASEDNLSSSTGE). Disordered regions lie at residues 662-706 (SSLP…TESE), 746-765 (SLGSWINSSPDSSENLSEIP), 794-911 (GTEG…THLL), and 948-998 (KLPP…SRHN). Basic and acidic residues predominate over residues 989-998 (HGKDGCSRHN).

Belongs to the TRAFAC class myosin-kinesin ATPase superfamily. Kinesin family.

The protein localises to the cytoplasm. Its subcellular location is the cytoskeleton. The protein resides in the cell projection. It localises to the cilium. In terms of biological role, plus end-directed microtubule-dependent motor protein that regulates the length of motile cilia by mediating depolymerization of microtubules at ciliary tips. This is Kinesin-like protein KIF19 (KIF19) from Homo sapiens (Human).